The sequence spans 193 residues: Protein PapJ (193 aa).

The signal sequence occupies residues 1–27; sequence MVVNKTTAVLYLIALSLSGFIHTFLRA.

The protein resides in the periplasm. This protein maintains pilus integrity and thus is an important participant in pilus assembly. It may function as molecular chaperone directly or indirectly in the correct assembly of PapA subunits. This chain is Protein PapJ (papJ), found in Escherichia coli.